Consider the following 231-residue polypeptide: Modulator of macroautophagy TMEM150B-B (231 aa).

A topological domain (cytoplasmic) is located at residue M1. Residues 2–22 traverse the membrane as a helical segment; it reads WAWALLPICLTVWATGGIWIV. At 23 to 50 the chain is on the extracellular side; sequence YAMSVSNGSVNLSDGFPYISVSGTYPPQ. N-linked (GlcNAc...) asparagine glycosylation is found at N29 and N33. Residues 51–71 traverse the membrane as a helical segment; that stretch reads SCVFGQVLNVGAMLAVWISVI. Residues 72–83 are Cytoplasmic-facing; the sequence is RFQQIRDYNCHS. The helical transmembrane segment at 84–104 threads the bilayer; the sequence is VLNSVSLATGILCALGTSIVG. Topologically, residues 105–115 are extracellular; sequence NFQQSNQLQTH. A helical transmembrane segment spans residues 116 to 136; sequence LAGAFLAFIIGNVYFWMQTAL. Over 137 to 150 the chain is Cytoplasmic; that stretch reads TYMVKPKHGGCYIG. A helical membrane pass occupies residues 151-171; sequence PIRFCLSIACTALIVAMAVFL. The Extracellular portion of the chain corresponds to 172–183; it reads KMNMKSVSAICE. A helical membrane pass occupies residues 184–204; it reads WIVAMILFLLYGLFAVDFWHL. Residues 205-231 lie on the Cytoplasmic side of the membrane; it reads DGHFFHVKKRRTVIPNEMEVSTVTLSI.

This sequence belongs to the DRAM/TMEM150 family.

It is found in the cell membrane. Its subcellular location is the endosome membrane. It localises to the cytoplasmic vesicle. The protein localises to the autophagosome membrane. Its function is as follows. Modulator of macroautophagy that causes accumulation of autophagosomes under basal conditions and enhances autophagic flux. Represses cell death and promotes long-term clonogenic survival of cells grown in the absence of glucose in a macroautophagy-independent manner. May have some role in extracellular matrix engulfment or growth factor receptor recycling, both of which can modulate cell survival. The polypeptide is Modulator of macroautophagy TMEM150B-B (Xenopus laevis (African clawed frog)).